A 505-amino-acid chain; its full sequence is tRNA-2-methylthio-N(6)-dimethylallyladenosine synthase (505 aa).

The tract at residues 1 to 39 (MGQKAKAQAPTTHPRPHTLSSQVAPALPRRPRHAAPESL) is disordered. One can recognise an MTTase N-terminal domain in the interval 47–162 (MKAHLITYGC…IGAALESNER (116 aa)). 6 residues coordinate [4Fe-4S] cluster: Cys56, Cys92, Cys125, Cys194, Cys198, and Cys201. The Radical SAM core domain occupies 180–413 (PSGKLQAHLT…IARQKDWSAR (234 aa)). In terms of domain architecture, TRAM spans 416 to 479 (AQKVGTVQQV…PHMMYGHILG (64 aa)).

This sequence belongs to the methylthiotransferase family. MiaB subfamily. In terms of assembly, monomer. [4Fe-4S] cluster is required as a cofactor.

It is found in the cytoplasm. The enzyme catalyses N(6)-dimethylallyladenosine(37) in tRNA + (sulfur carrier)-SH + AH2 + 2 S-adenosyl-L-methionine = 2-methylsulfanyl-N(6)-dimethylallyladenosine(37) in tRNA + (sulfur carrier)-H + 5'-deoxyadenosine + L-methionine + A + S-adenosyl-L-homocysteine + 2 H(+). In terms of biological role, catalyzes the methylthiolation of N6-(dimethylallyl)adenosine (i(6)A), leading to the formation of 2-methylthio-N6-(dimethylallyl)adenosine (ms(2)i(6)A) at position 37 in tRNAs that read codons beginning with uridine. In Deinococcus radiodurans (strain ATCC 13939 / DSM 20539 / JCM 16871 / CCUG 27074 / LMG 4051 / NBRC 15346 / NCIMB 9279 / VKM B-1422 / R1), this protein is tRNA-2-methylthio-N(6)-dimethylallyladenosine synthase.